The sequence spans 218 residues: Peroxiredoxin-like 2A (218 aa).

The segment at 3–101 (MWSIGAGAIG…DELGVPLYAV (99 aa)) is thioredoxin fold. Active-site redox-active residues include Cys74 and Cys77.

The protein belongs to the peroxiredoxin-like PRXL2 family. PRXL2A subfamily.

The protein resides in the cytoplasm. Its subcellular location is the secreted. Functionally, involved in redox regulation of the cell. Acts as an antioxidant. Inhibits TNFSF11-induced NFKB1 and JUN activation and osteoclast differentiation. May affect bone resorption and help to maintain bone mass. Acts as a negative regulator of macrophage-mediated inflammation by inhibiting macrophage production of inflammatory cytokines, probably through suppression of the MAPK signaling pathway. This is Peroxiredoxin-like 2A (PRXL2A) from Bos taurus (Bovine).